The primary structure comprises 141 residues: Large ribosomal subunit protein uL11 (141 aa).

It belongs to the universal ribosomal protein uL11 family. As to quaternary structure, part of the ribosomal stalk of the 50S ribosomal subunit. Interacts with L10 and the large rRNA to form the base of the stalk. L10 forms an elongated spine to which L12 dimers bind in a sequential fashion forming a multimeric L10(L12)X complex. In terms of processing, one or more lysine residues are methylated.

In terms of biological role, forms part of the ribosomal stalk which helps the ribosome interact with GTP-bound translation factors. The polypeptide is Large ribosomal subunit protein uL11 (Prochlorococcus marinus (strain MIT 9313)).